The following is a 505-amino-acid chain: MCGIVGIAGVMPVNQSIYDALTVLQHRGQDAAGIITIDANNCFRLRKANGLVSDVFEARHMQRLQGNMGIGHVRYPTAGSSSASEAQPFYVNSPYGITLAHNGNLTNAHELRKKLFEEKRRHINTTSDSEILLNIFASELDNFRHYPLEADNIFAAIAATNRLIRGAYACVAMIIGHGMVAFRDPNGIRPLVLGKRDIDENRTEYMVASESVALDTLGFDFLRDVAPGEAIYITEEGQLFTRQCADNPVSNPCLFEYVYFARPDSFIDKISVYSARVNMGTKLGEKIAREWEDLDIDVVIPIPETSCDIALEIARILGKPYRQGFVKNRYVGRTFIMPGQQLRRKSVRRKLNANRAEFRDKNVLLVDDSIVRGTTSEQIIEMAREAGAKKVYLASAAPEIRFPNVYGIDMPSATELIAHGREVDEIRQIIGADGLIFQDLNDLIDAVRAENPDIQQFECSVFNGVYVTKDVDQGYLDFLDTLRNDDAKAVQRQNEVENLEMHNEG.

Residue Cys-2 is the Nucleophile of the active site. Residues 2–236 (CGIVGIAGVM…PGEAIYITEE (235 aa)) form the Glutamine amidotransferase type-2 domain. Mg(2+)-binding residues include Thr-305, Asp-367, and Asp-368.

It in the C-terminal section; belongs to the purine/pyrimidine phosphoribosyltransferase family. As to quaternary structure, homotetramer. Mg(2+) is required as a cofactor.

It catalyses the reaction 5-phospho-beta-D-ribosylamine + L-glutamate + diphosphate = 5-phospho-alpha-D-ribose 1-diphosphate + L-glutamine + H2O. The protein operates within purine metabolism; IMP biosynthesis via de novo pathway; N(1)-(5-phospho-D-ribosyl)glycinamide from 5-phospho-alpha-D-ribose 1-diphosphate: step 1/2. Its activity is regulated as follows. Inhibited by iodoacetamide and by the glutamine analogs chloroketone and DON. Catalyzes the formation of phosphoribosylamine from phosphoribosylpyrophosphate (PRPP) and glutamine. Can also use NH(3) in place of glutamine. This Escherichia coli (strain K12) protein is Amidophosphoribosyltransferase.